Reading from the N-terminus, the 240-residue chain is Uridylate kinase (240 aa).

ATP is bound at residue 12 to 15 (KLSG). The tract at residues 20 to 25 (GKQGFG) is involved in allosteric activation by GTP. Position 54 (G54) interacts with UMP. ATP-binding residues include G55 and R59. UMP contacts are provided by residues D74 and 135-142 (TGNPYFST). The ATP site is built by N163, Y169, and D172.

The protein belongs to the UMP kinase family. As to quaternary structure, homohexamer.

The protein resides in the cytoplasm. The catalysed reaction is UMP + ATP = UDP + ADP. The protein operates within pyrimidine metabolism; CTP biosynthesis via de novo pathway; UDP from UMP (UMPK route): step 1/1. Allosterically activated by GTP. Inhibited by UTP. Its function is as follows. Catalyzes the reversible phosphorylation of UMP to UDP. The chain is Uridylate kinase from Geobacillus kaustophilus (strain HTA426).